The sequence spans 368 residues: DNA replication and repair protein RecF (368 aa).

An ATP-binding site is contributed by 30–37 (GDNGAGKT).

The protein belongs to the RecF family.

Its subcellular location is the cytoplasm. Functionally, the RecF protein is involved in DNA metabolism; it is required for DNA replication and normal SOS inducibility. RecF binds preferentially to single-stranded, linear DNA. It also seems to bind ATP. This is DNA replication and repair protein RecF from Xanthomonas campestris pv. campestris (strain 8004).